The primary structure comprises 234 residues: MSETWEALRKKARSTENSIDVKLVSLNKLTASSHGGFDIDEKTVSSRQTTFRTVTTEIEGLIEQLTNINDDMNDVAGAQSSASWASNPAIQHTLRRHREILRDYGSEYRRARDNVDQVLQRELLLSSSNNESRNPAVNNRARGYDMYLKENDHINACDRLLDEQIEMAMSTKENVARQGINLRGISNRLHYITKKYPAINNLMQKIKTKKQKNTMILAGVISACLIFTIFWIIN.

Residues 1 to 212 (MSETWEALRK…MQKIKTKKQK (212 aa)) are Cytoplasmic-facing. Residues 54 to 121 (VTTEIEGLIE…RDNVDQVLQR (68 aa)) are a coiled coil. Residues 213 to 233 (NTMILAGVISACLIFTIFWII) traverse the membrane as a helical; Anchor for type IV membrane protein segment. Position 234 (asparagine 234) is a topological domain, vesicular.

The protein belongs to the GOSR1 family. As to quaternary structure, component of several multiprotein Golgi SNARE complexes.

Its subcellular location is the golgi apparatus membrane. Functionally, involved in transport from the ER to the Golgi apparatus as well as in intra-Golgi transport. It belongs to a super-family of proteins called t-SNAREs or soluble NSF (N-ethylmaleimide-sensitive factor) attachment protein receptor. Cooperates with ykt-6 for proper expression of Golgi-resident proteins. Required along with ykt-6 for normal embryonic development, seam cell division or differentiation, and ray formation. The chain is Golgi SNAP receptor complex member 1 from Caenorhabditis briggsae.